The following is a 714-amino-acid chain: MSLSSGGWTRASPPAQSSSSHLGHEASQSACSTVLMSVKVSVCHSGIRPLCLPGAGDESLRLQLSMDPGKAGEFRLALRDISATAAGRSVFIAEFDLKTVQYEVKTPLCHELSLATPPHDRISFKFRCEQEAQEWATVVMSSLREAHRVAISSSTEEGRLPPPPLATQSKAPMPRTEEICAELVSAIEAGDVRSASVCASSLAKQKAALSIQPSKRNYTDSEVCLAVVVEDASSSCCVSVKVFPHSTIGALKQQVFSDYGFHPRVQRWVIGQSLCSDHRSLASYGVQRDGDTAFLYLISARQARLSRGIYQQDQESALLMVPTTHQAHQEAVSNGPAALNTASRPYSTLPTRLHNSHNTLSNNAGGSERLGLSDIRDLINLELPQLNEALGPNRTSIQPGWACPTCTYINKPTRPGCEMCSADRPEGYTVPGNYRPDALELRRIQQEKEAIRQYQQARETERRENFARLVQMDGQDLVPNPERVECRICYVELESGEGVLLRECLHCFCKECLRSVILMSEDPQVACPYRDESYACDCVLQEREIRALVSVDDYQHWLQRGLSVAESRCEGSYHCATADCPGWCVYEDTVNTFHCPVCKKQNCLLCKAIHEGMNCKQYQDDLTARAINDSAARRTRDLLKTLVNSGEAMHCPQCGIIVQKKEGCDWLRCTVCHTEICWVTRGPRWGPKGPGDISGGCRCNVNKQRCHPKCQNCH.

Disordered stretches follow at residues 1-23 (MSLS…SHLG) and 152-172 (SSST…SKAP). Polar residues predominate over residues 14–23 (PAQSSSSHLG). In terms of domain architecture, Ubiquitin-like spans 225-301 (LAVVVEDASS…TAFLYLISAR (77 aa)). A RanBP2-type zinc finger spans residues 394–426 (RTSIQPGWACPTCTYINKPTRPGCEMCSADRPE). A TRIAD supradomain region spans residues 482–710 (ERVECRICYV…VNKQRCHPKC (229 aa)). Cys486, Cys489, Cys504, His506, Cys509, Cys512, Cys527, Cys536, Cys575, Cys580, Cys595, Cys598, Cys603, Cys606, His610, Cys615, Cys651, and Cys654 together coordinate Zn(2+). An RING-type 1 zinc finger spans residues 486-536 (CRICYVELESGEGVLLRECLHCFCKECLRSVILMSEDPQVACPYRDESYAC). An IBR-type zinc finger spans residues 555 to 615 (QHWLQRGLSV…CKAIHEGMNC (61 aa)). The RING-type 2; atypical zinc-finger motif lies at 651-680 (CPQCGIIVQKKEGCDWLRCTVCHTEICWVT). The active site involves Cys664. Zn(2+) contacts are provided by Cys669 and Cys672.

This sequence belongs to the RBR family. Component of the LUBAC complex (linear ubiquitin chain assembly complex).

The enzyme catalyses [E2 ubiquitin-conjugating enzyme]-S-ubiquitinyl-L-cysteine + [acceptor protein]-L-lysine = [E2 ubiquitin-conjugating enzyme]-L-cysteine + [acceptor protein]-N(6)-ubiquitinyl-L-lysine.. The protein operates within protein modification; protein ubiquitination. Component of the LUBAC complex which conjugates linear ('Met-1'-linked) polyubiquitin chains to substrates and plays a key role in NF-kappa-B activation and regulation of inflammation. LUBAC conjugates linear polyubiquitin to ikbkg and RIPK1 and is involved in activation of the canonical NF-kappa-B and the JNK signaling pathways. Linear ubiquitination mediated by the LUBAC complex interferes with TNF-induced cell death and thereby prevents inflammation. LUBAC is recruited to the TNF-R1 signaling complex (TNF-RSC) to conjugate linear polyubiquitin to ikbkg and possibly other components contributing to the stability of the complex. The LUBAC complex is also involved in innate immunity by conjugating linear polyubiquitin chains at the surface of bacteria invading the cytosol to form the ubiquitin coat surrounding bacteria. LUBAC is not able to initiate formation of the bacterial ubiquitin coat, and can only promote formation of linear polyubiquitins on pre-existing ubiquitin. The bacterial ubiquitin coat acts as an 'eat-me' signal for xenophagy and promotes NF-kappa-B activation. Binds polyubiquitin of different linkage types. The sequence is that of RanBP-type and C3HC4-type zinc finger-containing protein 1 (rbck1) from Danio rerio (Zebrafish).